The chain runs to 446 residues: C-type lectin domain family 18 member C (446 aa).

A signal peptide spans 1-26 (MLHPETSPGRGHLLAVLLALLGTAWA). Residues 52-182 (LSLHNRLRSW…AAIEAFVCAY (131 aa)) enclose the SCP domain. N-linked (GlcNAc...) asparagine glycosylation is present at N144. The region spanning 228–261 (PRNPCRMSCQNHGRLNISTCHCHCPPGYTGRYCQ) is the EGF-like domain. Disulfide bonds link C236–C249, C251–C260, C327–C432, and C408–C424. A C-type lectin domain is found at 306–433 (IDGDCFMVSS…CKTRNRYICQ (128 aa)).

As to expression, detected in peripheral blood cells.

The protein localises to the secreted. The protein resides in the endoplasmic reticulum. It is found in the golgi apparatus. It localises to the endosome. In terms of biological role, binds polysaccharidesin a Ca(2+)-independent manner with a preferentially binding to fucoidan, beta-glucans and galactans. The sequence is that of C-type lectin domain family 18 member C (CLEC18C) from Homo sapiens (Human).